A 474-amino-acid polypeptide reads, in one-letter code: Phenylalanine--tRNA ligase alpha subunit (474 aa).

L-phenylalanine-binding positions include T317, 356-358 (QLE), and Y396. E398 is a Mg(2+) binding site. F421 contributes to the L-phenylalanine binding site.

It belongs to the class-II aminoacyl-tRNA synthetase family. Phe-tRNA synthetase alpha subunit type 2 subfamily. As to quaternary structure, tetramer of two alpha and two beta subunits. Mg(2+) serves as cofactor.

The protein localises to the cytoplasm. The enzyme catalyses tRNA(Phe) + L-phenylalanine + ATP = L-phenylalanyl-tRNA(Phe) + AMP + diphosphate + H(+). In Archaeoglobus fulgidus (strain ATCC 49558 / DSM 4304 / JCM 9628 / NBRC 100126 / VC-16), this protein is Phenylalanine--tRNA ligase alpha subunit.